The primary structure comprises 588 residues: NADP-dependent malic enzyme 3 (588 aa).

An N-acetylglycine modification is found at G2. The active-site Proton donor is the Y136. NADP(+) is bound at residue R189. Catalysis depends on K207, which acts as the Proton acceptor. Positions 279, 280, and 303 each coordinate a divalent metal cation. NADP(+) is bound by residues D303, 332–348 (LFLG…ELIA), and N444.

This sequence belongs to the malic enzymes family. As to quaternary structure, homohexamers and homooctamers. It depends on Mg(2+) as a cofactor. Mn(2+) serves as cofactor. Mostly expressed in flowers, and, to a lower extent, in stems. In leaves and stems, restricted to the trichomes and trichome basal cells. Also present in the stipules flanking the base of the inflorescence bract leaves and in the meristematic zone of developing lateral roots. In flowers, present in pollen and the abscission zone of developing siliques.

It is found in the cytoplasm. It catalyses the reaction (S)-malate + NADP(+) = pyruvate + CO2 + NADPH. The catalysed reaction is oxaloacetate + H(+) = pyruvate + CO2. With respect to regulation, slightly activated by succinate and aspartate. Repressed by fumarate, malate, oxaloacetate and glucose. This Arabidopsis thaliana (Mouse-ear cress) protein is NADP-dependent malic enzyme 3 (NADP-ME3).